The chain runs to 947 residues: Cell adhesion molecule CEACAM5 (947 aa).

The first 34 residues, 1–34 (MEASSVLPCKWCTHLQGLLLTASFLTCCHLPTTA), serve as a signal peptide directing secretion. Ig-like V-type domains are found at residues 35 to 132 (QITI…EIVS), 166 to 259 (SEGG…VQLY), 270 to 378 (PLQV…LHVN), 392 to 498 (RLSI…LQLD), 509 to 615 (QVKI…LHVN), 642 to 733 (GESV…VQLQ), and 746 to 851 (DQLI…VQVH). N57, N103, N110, N207, N224, N341, N461, N472, N578, N698, N709, N816, and N823 each carry an N-linked (GlcNAc...) asparagine glycan. Residues 859 to 943 (PFVRVTDTTV…SKSSLPVRLA (85 aa)) enclose the Ig-like C2-type 1 domain. C878 and C926 are joined by a disulfide.

Belongs to the immunoglobulin superfamily. CEA family. As to quaternary structure, homodimer.

The protein localises to the cell membrane. The protein resides in the apical cell membrane. It is found in the cell surface. Functionally, cell surface glycoprotein that plays a role in cell adhesion, intracellular signaling and tumor progression. Mediates homophilic and heterophilic cell adhesion with other carcinoembryonic antigen-related cell adhesion molecules, such as CEACAM6. Plays a role as an oncogene by promoting tumor progression; induces resistance to anoikis of colorectal carcinoma cells. The chain is Cell adhesion molecule CEACAM5 from Mus musculus (Mouse).